Here is a 214-residue protein sequence, read N- to C-terminus: Small ribosomal subunit protein uS5 (214 aa).

The S5 DRBM domain occupies 54–117 (MKYEVIDIGM…RDAKMHVIPV (64 aa)).

The protein belongs to the universal ribosomal protein uS5 family. As to quaternary structure, part of the 30S ribosomal subunit. Contacts protein S4.

In terms of biological role, with S4 and S12 plays an important role in translational accuracy. The polypeptide is Small ribosomal subunit protein uS5 (Metallosphaera sedula (strain ATCC 51363 / DSM 5348 / JCM 9185 / NBRC 15509 / TH2)).